Here is a 287-residue protein sequence, read N- to C-terminus: 3-methyl-2-oxobutanoate hydroxymethyltransferase (287 aa).

Positions 67 and 106 each coordinate Mg(2+). 3-methyl-2-oxobutanoate contacts are provided by residues 67–68, D106, and K136; that span reads DS. A Mg(2+)-binding site is contributed by E138. Catalysis depends on E204, which acts as the Proton acceptor.

Belongs to the PanB family. In terms of assembly, homodecamer; pentamer of dimers. The cofactor is Mg(2+).

It is found in the cytoplasm. It catalyses the reaction 3-methyl-2-oxobutanoate + (6R)-5,10-methylene-5,6,7,8-tetrahydrofolate + H2O = 2-dehydropantoate + (6S)-5,6,7,8-tetrahydrofolate. It functions in the pathway cofactor biosynthesis; (R)-pantothenate biosynthesis; (R)-pantoate from 3-methyl-2-oxobutanoate: step 1/2. Functionally, catalyzes the reversible reaction in which hydroxymethyl group from 5,10-methylenetetrahydrofolate is transferred onto alpha-ketoisovalerate to form ketopantoate. In Streptomyces avermitilis (strain ATCC 31267 / DSM 46492 / JCM 5070 / NBRC 14893 / NCIMB 12804 / NRRL 8165 / MA-4680), this protein is 3-methyl-2-oxobutanoate hydroxymethyltransferase.